The primary structure comprises 137 residues: Large ribosomal subunit protein bL12 (137 aa).

It belongs to the bacterial ribosomal protein bL12 family. In terms of assembly, homodimer. Part of the ribosomal stalk of the 50S ribosomal subunit. Forms a multimeric L10(L12)X complex, where L10 forms an elongated spine to which 2 to 4 L12 dimers bind in a sequential fashion. Binds GTP-bound translation factors.

Functionally, forms part of the ribosomal stalk which helps the ribosome interact with GTP-bound translation factors. Is thus essential for accurate translation. The chain is Large ribosomal subunit protein bL12 from Gloeobacter violaceus (strain ATCC 29082 / PCC 7421).